The sequence spans 75 residues: Salivary glue protein Sgs-8 (75 aa).

Positions 1 to 24 are cleaved as a signal peptide; it reads MKLLVVAVIACIMLIGFADPASGC.

In Drosophila melanogaster (Fruit fly), this protein is Salivary glue protein Sgs-8 (Sgs8).